Reading from the N-terminus, the 96-residue chain is Co-chaperonin GroES (96 aa).

Belongs to the GroES chaperonin family. Heptamer of 7 subunits arranged in a ring. Interacts with the chaperonin GroEL.

The protein localises to the cytoplasm. Functionally, together with the chaperonin GroEL, plays an essential role in assisting protein folding. The GroEL-GroES system forms a nano-cage that allows encapsulation of the non-native substrate proteins and provides a physical environment optimized to promote and accelerate protein folding. GroES binds to the apical surface of the GroEL ring, thereby capping the opening of the GroEL channel. The polypeptide is Co-chaperonin GroES (Methylobacterium radiotolerans (strain ATCC 27329 / DSM 1819 / JCM 2831 / NBRC 15690 / NCIMB 10815 / 0-1)).